The chain runs to 602 residues: Laccase 1 (602 aa).

Positions M1 to A20 are cleaved as a signal peptide. 2 Plastocyanin-like domains span residues T30 to K128 and Y157 to N345. Cu cation contacts are provided by H78, H80, H108, and H110. 7 N-linked (GlcNAc...) asparagine glycosylation sites follow: N176, N241, N264, N388, N430, N454, and N470. Residues N461–G584 form the Plastocyanin-like 3 domain. Cu cation-binding residues include H492, H495, and H497. N512 carries an N-linked (GlcNAc...) asparagine glycan. Residues H566, C567, H568, and H572 each contribute to the Cu cation site.

Belongs to the multicopper oxidase family. The cofactor is Cu cation.

It localises to the cell surface. Its pathway is pigment biosynthesis. Its function is as follows. Laccase; part of the Pks1 gene cluster that mediates the biosynthesis of an anthraquinone derivative pigment that contributes to conidial pigmentation that provides protection from UV radiation, heat and cold stress. The polyketide synthase Pks1 produces 1-acetyl-2,4,6,8-tetrahydroxy-9,10-anthraquinone though condensation of acetyl-CoA with malonyl-CoA. The dehydratase EthD and the laccase Mlac1 further convert the anthraquinone derivative into the final conidial pigment. This chain is Laccase 1, found in Metarhizium album (strain ARSEF 1941).